Consider the following 1235-residue polypeptide: MFSGGGGPLSPGGKSAARAASGFFAPAGPRGASRGPPPCLRQNFYNPYLAPVGTQQKPTGPTQRHTYYSECDEFRFIAPRVLDEDAPPEKRAGVHDGHLKRAPKVYCGGDERDVLRVGSGGFWPRRSRLWGGVDHAPAGFNPTVTVFHVYDILENVEHAYGMRAAQFHARFMDAITPTGTVITLLGLTPEGHRVAVHVYGTRQYFYMNKEEVDRHLQCRAPRDLCERMAAALRESPGASFRGISADHFEAEVVERTDVYYYETRPALFYRVYVRSGRVLSYLCDNFCPAIKKYEGGVDATTRFILDNPGFVTFGWYRLKPGRNNTLAQPAAPMAFGTSSDVEFNCTADNLAIEGGMSDLPAYKLMCFDIECKAGGEDELAFPVAGHPEDLVIQISCLLYDLSTTALEHVLLFSLGSCDLPESHLNELAARGLPTPVVLEFDSEFEMLLAFMTLVKQYGPEFVTGYNIINFDWPFLLAKLTDIYKVPLDGYGRMNGRGVFRVWDIGQSHFQKRSKIKVNGMVNIDMYGIITDKIKLSSYKLNAVAEAVLKDKKKDLSYRDIPAYYAAGPAQRGVIGEYCIQDSLLVGQLFFKFLPHLELSAVARLAGINITRTIYDGQQIRVFTCLLRLADQKGFILPDTQGRFRGAGGEAPKRPAAAREDEERPEEEGEDEDEREEGGGEREPEGARETAGRHVGYQGARVLDPTSGFHVNPVVVFDFASLYPSIIQAHNLCFSTLSLRADAVAHLEAGKDYLEIEVGGRRLFFVKAHVRESLLSILLRDWLAMRKQIRSRIPQSSPEEAVLLDKQQAAIKVVCNSVYGFTGVQHGLLPCLHVAATVTTIGREMLLATREYVHARWAAFEQLLADFPEAADMRAPGPYSMRIIYGDTDSIFVLCRGLTAAGLTAVGDKMASHISRALFLPPIKLECEKTFTKLLLIAKKKYIGVIYGGKMLIKGVDLVRKNNCAFINRTSRALVDLLFYDDTVSGAAAALAERPAEEWLARPLPEGLQAFGAVLVDAHRRITDPERDIQDFVLTAELSRHPRAYTNKRLAHLTVYYKLMARRAQVPSIKDRIPYVIVAQTREVEETVARLAALRELDAAAPGDEPAPPAALPSPAKRPRETPSPADPPGGASKPRKLLVSELAEDPAYAIAHGVALNTDYYFSHLLGAACVTFKALFGNNAKITESLLKRFIPEVWHPPDDVAARLRTAGFGAVGAGATAEETRRMLHRAFDTLA.

Disordered regions lie at residues 640–692 (QGRF…TAGR) and 1098–1134 (AAAPGDEPAPPAALPSPAKRPRETPSPADPPGGASKP). A compositionally biased stretch (basic and acidic residues) spans 650-661 (APKRPAAAREDE). Residues 662 to 675 (ERPEEEGEDEDERE) are compositionally biased toward acidic residues. Positions 676 to 691 (EGGGEREPEGARETAG) are enriched in basic and acidic residues.

It belongs to the DNA polymerase type-B family. In terms of assembly, forms a complex with the ssDNA-binding protein UL29, the DNA polymerase processivity factor, and the alkaline exonuclease. Interacts with the putative helicase-primase complex subunit UL8; this interaction may coordinate leading and lagging strand DNA synthesis at the replication fork.

It is found in the host nucleus. It carries out the reaction DNA(n) + a 2'-deoxyribonucleoside 5'-triphosphate = DNA(n+1) + diphosphate. The catalysed reaction is Endonucleolytic cleavage to 5'-phosphomonoester.. In terms of biological role, replicates viral genomic DNA. The replication complex is composed of six viral proteins: the DNA polymerase, processivity factor, primase, primase-associated factor, helicase, and ssDNA-binding protein. Additionally, the polymerase contains an intrinsic ribonuclease H (RNase H) activity that specifically degrades RNA/DNA heteroduplexes or duplex DNA substrates in the 5' to 3' direction. Therefore, it can catalyze the excision of the RNA primers that initiate the synthesis of Okazaki fragments at a replication fork during viral DNA replication. This Homo sapiens (Human) protein is DNA polymerase catalytic subunit.